The chain runs to 441 residues: Glutamyl-tRNA reductase (441 aa).

Residues 49–52 (TCNR), Ser-109, 114–116 (EDQ), and Gln-120 contribute to the substrate site. Cys-50 functions as the Nucleophile in the catalytic mechanism. 190-195 (GAGKMS) serves as a coordination point for NADP(+).

Belongs to the glutamyl-tRNA reductase family. As to quaternary structure, homodimer.

It catalyses the reaction (S)-4-amino-5-oxopentanoate + tRNA(Glu) + NADP(+) = L-glutamyl-tRNA(Glu) + NADPH + H(+). It participates in porphyrin-containing compound metabolism; protoporphyrin-IX biosynthesis; 5-aminolevulinate from L-glutamyl-tRNA(Glu): step 1/2. Functionally, catalyzes the NADPH-dependent reduction of glutamyl-tRNA(Glu) to glutamate 1-semialdehyde (GSA). This chain is Glutamyl-tRNA reductase, found in Moorella thermoacetica (strain ATCC 39073 / JCM 9320).